The primary structure comprises 921 residues: Collagen alpha-1(IX) chain (921 aa).

The signal sequence occupies residues methionine 1–alanine 23. The tract at residues alanine 24–arginine 268 is nonhelical region (NC4). Cystine bridges form between cysteine 44–cysteine 242 and cysteine 198–cysteine 252. One can recognise a Laminin G-like domain in the interval glycine 50–proline 244. A glycan (N-linked (GlcNAc...) asparagine) is linked at asparagine 171. The Zn(2+) site is built by aspartate 213, aspartate 215, and histidine 253. Disordered regions lie at residues glutamate 254–aspartate 759 and arginine 783–serine 905. Collagen-like domains are found at residues glycine 269–alanine 324, aspartate 325–glycine 356, glycine 358–glycine 403, proline 416–glycine 472, isoleucine 473–lysine 516, glutamate 587–glycine 643, glycine 655–glycine 712, and leucine 713–arginine 755. The interval glycine 269–histidine 405 is triple-helical region (COL3). 2 stretches are compositionally biased toward pro residues: residues glutamate 273–valine 285 and lysine 298–alanine 307. A compositionally biased stretch (low complexity) spans threonine 368–aspartate 383. Residues arginine 387–proline 398 are compositionally biased toward pro residues. The tract at residues aspartate 406–proline 417 is nonhelical region (NC3). The segment at glycine 418–alanine 756 is triple-helical region (COL2). Residues aspartate 479–aspartate 489 show a composition bias toward basic and acidic residues. Low complexity-rich tracts occupy residues asparagine 602–glutamine 621 and leucine 630–leucine 650. The segment at proline 757–serine 786 is nonhelical region (NC2). Residues glycine 787 to cysteine 901 are triple-helical region (COL1). Collagen-like domains follow at residues glycine 790–glycine 847 and arginine 848–glycine 899. Residues arginine 794 to proline 804 show a composition bias toward pro residues. Basic and acidic residues predominate over residues proline 833–proline 845. A compositionally biased stretch (pro residues) spans valine 888 to leucine 897. The segment at glutamate 902–proline 921 is nonhelical region (NC1).

Belongs to the fibril-associated collagens with interrupted helices (FACIT) family. As to quaternary structure, heterotrimer of an alpha 1(IX), an alpha 2(IX) and an alpha 3(IX) chain. Post-translationally, covalently linked to the telopeptides of type II collagen by lysine-derived cross-links. Prolines at the third position of the tripeptide repeating unit (G-X-Y) are hydroxylated in some or all of the chains.

The protein resides in the secreted. It is found in the extracellular space. It localises to the extracellular matrix. Its function is as follows. Structural component of hyaline cartilage and vitreous of the eye. This is Collagen alpha-1(IX) chain (COL9A1) from Homo sapiens (Human).